The chain runs to 353 residues: Photosystem II protein D1 (353 aa).

Threonine 2 is subject to N-acetylthreonine. Threonine 2 is subject to Phosphothreonine. 3 helical membrane passes run 29-46 (YIGWFGVLMIPTLLTATS), 118-133 (HFLLGVACYMGREWEL), and 142-156 (WIAVAYSAPVAAATA). Histidine 118 contacts chlorophyll a. A pheophytin a-binding site is contributed by tyrosine 126. Positions 170 and 189 each coordinate [CaMn4O5] cluster. The helical transmembrane segment at 197–218 (FHMLGVAGVFGGSLFSAMHGSL) threads the bilayer. Residue histidine 198 participates in chlorophyll a binding. Residues histidine 215 and 264-265 (SF) each bind a quinone. Position 215 (histidine 215) interacts with Fe cation. Histidine 272 serves as a coordination point for Fe cation. A helical membrane pass occupies residues 274–288 (FLAAWPVVGIWFTAL). Residues histidine 332, glutamate 333, aspartate 342, and alanine 344 each coordinate [CaMn4O5] cluster. A propeptide spanning residues 345–353 (AVEAPSTNG) is cleaved from the precursor.

Belongs to the reaction center PufL/M/PsbA/D family. PSII is composed of 1 copy each of membrane proteins PsbA, PsbB, PsbC, PsbD, PsbE, PsbF, PsbH, PsbI, PsbJ, PsbK, PsbL, PsbM, PsbT, PsbX, PsbY, PsbZ, Psb30/Ycf12, at least 3 peripheral proteins of the oxygen-evolving complex and a large number of cofactors. It forms dimeric complexes. The cofactor is The D1/D2 heterodimer binds P680, chlorophylls that are the primary electron donor of PSII, and subsequent electron acceptors. It shares a non-heme iron and each subunit binds pheophytin, quinone, additional chlorophylls, carotenoids and lipids. D1 provides most of the ligands for the Mn4-Ca-O5 cluster of the oxygen-evolving complex (OEC). There is also a Cl(-1) ion associated with D1 and D2, which is required for oxygen evolution. The PSII complex binds additional chlorophylls, carotenoids and specific lipids.. Post-translationally, tyr-161 forms a radical intermediate that is referred to as redox-active TyrZ, YZ or Y-Z. C-terminally processed by CTPA; processing is essential to allow assembly of the oxygen-evolving complex and thus photosynthetic growth.

The protein localises to the plastid. It localises to the chloroplast thylakoid membrane. The catalysed reaction is 2 a plastoquinone + 4 hnu + 2 H2O = 2 a plastoquinol + O2. Functionally, photosystem II (PSII) is a light-driven water:plastoquinone oxidoreductase that uses light energy to abstract electrons from H(2)O, generating O(2) and a proton gradient subsequently used for ATP formation. It consists of a core antenna complex that captures photons, and an electron transfer chain that converts photonic excitation into a charge separation. The D1/D2 (PsbA/PsbD) reaction center heterodimer binds P680, the primary electron donor of PSII as well as several subsequent electron acceptors. The chain is Photosystem II protein D1 from Drimys granadensis.